Reading from the N-terminus, the 519-residue chain is Anthranilate synthase component 1 (519 aa).

L-tryptophan is bound by residues Thr40 and 293–295 (PYM). 330–331 (GT) is a chorismate binding site. Position 363 (Glu363) interacts with Mg(2+). Chorismate is bound by residues Tyr451, Arg471, 485 to 487 (GSG), and Gly487. Position 500 (Glu500) interacts with Mg(2+).

It belongs to the anthranilate synthase component I family. In terms of assembly, heterotetramer consisting of two non-identical subunits: a beta subunit (TrpG) and a large alpha subunit (TrpE). Mg(2+) serves as cofactor.

It catalyses the reaction chorismate + L-glutamine = anthranilate + pyruvate + L-glutamate + H(+). It participates in amino-acid biosynthesis; L-tryptophan biosynthesis; L-tryptophan from chorismate: step 1/5. Feedback inhibited by tryptophan. In terms of biological role, part of a heterotetrameric complex that catalyzes the two-step biosynthesis of anthranilate, an intermediate in the biosynthesis of L-tryptophan. In the first step, the glutamine-binding beta subunit (TrpG) of anthranilate synthase (AS) provides the glutamine amidotransferase activity which generates ammonia as a substrate that, along with chorismate, is used in the second step, catalyzed by the large alpha subunit of AS (TrpE) to produce anthranilate. In the absence of TrpG, TrpE can synthesize anthranilate directly from chorismate and high concentrations of ammonia. This is Anthranilate synthase component 1 (trpE) from Buchnera aphidicola subsp. Diuraphis noxia.